A 444-amino-acid polypeptide reads, in one-letter code: Phosphoglucosamine mutase (444 aa).

Serine 101 acts as the Phosphoserine intermediate in catalysis. Mg(2+)-binding residues include serine 101, aspartate 240, aspartate 242, and aspartate 244. Residue serine 101 is modified to Phosphoserine.

The protein belongs to the phosphohexose mutase family. It depends on Mg(2+) as a cofactor. In terms of processing, activated by phosphorylation.

The enzyme catalyses alpha-D-glucosamine 1-phosphate = D-glucosamine 6-phosphate. In terms of biological role, catalyzes the conversion of glucosamine-6-phosphate to glucosamine-1-phosphate. The polypeptide is Phosphoglucosamine mutase (Photobacterium profundum (strain SS9)).